A 176-amino-acid chain; its full sequence is Large ribosomal subunit protein uL15 (176 aa).

Positions 1–13 (MKLNDLRDNEGAR) are enriched in basic and acidic residues. Disordered regions lie at residues 1 to 48 (MKLN…AIKG) and 151 to 176 (IPAA…AKAE). A compositionally biased stretch (gly residues) spans 21-35 (RGIGSGKGKTGGRGQ). Residues 156–176 (PEHEKKAARSEANKKAKAKAE) are compositionally biased toward basic and acidic residues.

This sequence belongs to the universal ribosomal protein uL15 family. Part of the 50S ribosomal subunit.

Binds to the 23S rRNA. The sequence is that of Large ribosomal subunit protein uL15 from Erythrobacter litoralis (strain HTCC2594).